The chain runs to 277 residues: NH(3)-dependent NAD(+) synthetase (277 aa).

46-53 (GISGGQDS) contributes to the ATP binding site. Asp52 is a binding site for Mg(2+). Arg142 contributes to the deamido-NAD(+) binding site. Thr162 contributes to the ATP binding site. Glu167 contributes to the Mg(2+) binding site. Positions 175 and 182 each coordinate deamido-NAD(+). Residues Lys191 and Thr213 each coordinate ATP. 263–264 (HK) contributes to the deamido-NAD(+) binding site.

The protein belongs to the NAD synthetase family. As to quaternary structure, homodimer.

The catalysed reaction is deamido-NAD(+) + NH4(+) + ATP = AMP + diphosphate + NAD(+) + H(+). It functions in the pathway cofactor biosynthesis; NAD(+) biosynthesis; NAD(+) from deamido-NAD(+) (ammonia route): step 1/1. Catalyzes the ATP-dependent amidation of deamido-NAD to form NAD. Uses ammonia as a nitrogen source. In Corynebacterium glutamicum (strain R), this protein is NH(3)-dependent NAD(+) synthetase.